Consider the following 107-residue polypeptide: Phosphoribosyl-ATP pyrophosphatase (107 aa).

The protein belongs to the PRA-PH family.

The protein resides in the cytoplasm. The catalysed reaction is 1-(5-phospho-beta-D-ribosyl)-ATP + H2O = 1-(5-phospho-beta-D-ribosyl)-5'-AMP + diphosphate + H(+). It functions in the pathway amino-acid biosynthesis; L-histidine biosynthesis; L-histidine from 5-phospho-alpha-D-ribose 1-diphosphate: step 2/9. In Novosphingobium aromaticivorans (strain ATCC 700278 / DSM 12444 / CCUG 56034 / CIP 105152 / NBRC 16084 / F199), this protein is Phosphoribosyl-ATP pyrophosphatase.